The sequence spans 273 residues: Large ribosomal subunit protein uL2 (273 aa).

A disordered region spans residues 228–273; it reads VDHPHGGGEGKTSGGRHPVTPWGFPTKGKKTRKNKRTSKFIVKKRK. The segment covering 254–273 has biased composition (basic residues); that stretch reads KGKKTRKNKRTSKFIVKKRK.

Belongs to the universal ribosomal protein uL2 family. As to quaternary structure, part of the 50S ribosomal subunit. Forms a bridge to the 30S subunit in the 70S ribosome.

Functionally, one of the primary rRNA binding proteins. Required for association of the 30S and 50S subunits to form the 70S ribosome, for tRNA binding and peptide bond formation. It has been suggested to have peptidyltransferase activity; this is somewhat controversial. Makes several contacts with the 16S rRNA in the 70S ribosome. This Rickettsia akari (strain Hartford) protein is Large ribosomal subunit protein uL2.